The following is a 211-amino-acid chain: Ribosomal RNA small subunit methyltransferase G (211 aa).

S-adenosyl-L-methionine-binding positions include Gly-81, Leu-86, 132 to 133, and Arg-147; that span reads VE.

Belongs to the methyltransferase superfamily. RNA methyltransferase RsmG family.

The protein resides in the cytoplasm. The enzyme catalyses guanosine(527) in 16S rRNA + S-adenosyl-L-methionine = N(7)-methylguanosine(527) in 16S rRNA + S-adenosyl-L-homocysteine. Functionally, specifically methylates the N7 position of guanine in position 527 of 16S rRNA. The polypeptide is Ribosomal RNA small subunit methyltransferase G (Actinobacillus succinogenes (strain ATCC 55618 / DSM 22257 / CCUG 43843 / 130Z)).